We begin with the raw amino-acid sequence, 129 residues long: Iron-sulfur cluster assembly 1 homolog, mitochondrial (129 aa).

The transit peptide at 1–12 (MSASLVRATVRA) directs the protein to the mitochondrion. Fe cation contacts are provided by cysteine 57, cysteine 121, and cysteine 123.

The protein belongs to the HesB/IscA family. In terms of assembly, interacts with CRY2, but not with CRY1 (in vitro).

It localises to the mitochondrion. Its function is as follows. Involved in the maturation of mitochondrial 4Fe-4S proteins functioning late in the iron-sulfur cluster assembly pathway. Probably involved in the binding of an intermediate of Fe/S cluster assembly. The chain is Iron-sulfur cluster assembly 1 homolog, mitochondrial (Isca1) from Mus musculus (Mouse).